Reading from the N-terminus, the 224-residue chain is Homeobox protein Hox-B6 (224 aa).

The short motif at V127–Q132 is the Antp-type hexapeptide element. A DNA-binding region (homeobox) is located at residues G146 to S205. At S214 the chain carries Phosphoserine.

This sequence belongs to the Antp homeobox family.

It localises to the nucleus. Its function is as follows. Sequence-specific transcription factor which is part of a developmental regulatory system that provides cells with specific positional identities on the anterior-posterior axis. The sequence is that of Homeobox protein Hox-B6 (HOXB6) from Homo sapiens (Human).